The following is a 230-amino-acid chain: UPF0173 metal-dependent hydrolase SPO2976 (230 aa).

This sequence belongs to the UPF0173 family.

The polypeptide is UPF0173 metal-dependent hydrolase SPO2976 (Ruegeria pomeroyi (strain ATCC 700808 / DSM 15171 / DSS-3) (Silicibacter pomeroyi)).